Here is a 144-residue protein sequence, read N- to C-terminus: C-C motif chemokine 25 (144 aa).

The first 23 residues, 1 to 23, serve as a signal peptide directing secretion; that stretch reads MKLWLFACLVACFVGAWMPVVHA. 2 disulfides stabilise this stretch: cysteine 30/cysteine 58 and cysteine 31/cysteine 73. The segment at 98–144 is disordered; it reads KSASDSQTERKKSNHMKSKVENPNSTSVRSATLGHPRMVMMPRKTNN. Polar residues predominate over residues 118–127; sequence ENPNSTSVRS.

This sequence belongs to the intercrine beta (chemokine CC) family. As to expression, specifically expressed by thymic dendritic cells. High levels in thymus and small intestine.

The protein resides in the secreted. Potentially involved in T-cell development. Recombinant protein shows chemotactic activity on thymocytes, macrophages, THP-1 cells, and dendritics cells but is inactive on peripheral blood lymphocytes and neutrophils. Binds to CCR9. Binds to atypical chemokine receptor ACKR4 and mediates the recruitment of beta-arrestin (ARRB1/2) to ACKR4. This Mus musculus (Mouse) protein is C-C motif chemokine 25 (Ccl25).